Here is a 475-residue protein sequence, read N- to C-terminus: Ankyrin repeat, SAM and basic leucine zipper domain-containing protein 1 (475 aa).

Positions 1-38 are disordered; that stretch reads MATGSLRGLAVAGGGESSDSEDDGWEIGYLDRPPQKLK. 3 positions are modified to phosphoserine: serine 17, serine 18, and serine 20. ANK repeat units follow at residues 45–74, 78–107, 110–144, 148–177, 181–210, and 214–243; these read EKNETFKKALTTGDTSLVKELLDSGISVDS, YGWTPLMYAASVANVELVRVLLDRGANASF, DKQTILITACSARGSEEQILKCVELLLSRNADPNV, RLMTPIMYAARDGHPQVVALLVAHGAEVNI, NGYTALTWAARQGHKSVVLKLLELGANKTL, and DGKTPSEIAKRNKHLEIFNLLSLTLNPLEG. Positions 272 to 334 constitute an SAM domain; it reads SYTAFGDLEI…KILAALKELE (63 aa).

In terms of assembly, interacts with DDX4, PIWIL1, RANBP9 and TDRD1.

The protein resides in the cytoplasm. Its function is as follows. Plays a central role during spermatogenesis by repressing transposable elements and preventing their mobilization, which is essential for the germline integrity. Acts via the piRNA metabolic process, which mediates the repression of transposable elements during meiosis by forming complexes composed of piRNAs and Piwi proteins and governs the methylation and subsequent repression of transposons. Its association with pi-bodies suggests a participation in the primary piRNAs metabolic process. Required prior to the pachytene stage to facilitate the production of multiple types of piRNAs, including those associated with repeats involved in the regulation of retrotransposons. May act by mediating protein-protein interactions during germ cell maturation. This Oryctolagus cuniculus (Rabbit) protein is Ankyrin repeat, SAM and basic leucine zipper domain-containing protein 1 (ASZ1).